A 208-amino-acid chain; its full sequence is RNA chaperone ProQ (208 aa).

The span at 106–127 shows a compositional bias: basic and acidic residues; sequence SKAKVATRRKEQAKKAREEAKA. A disordered region spans residues 106–154; the sequence is SKAKVATRRKEQAKKAREEAKAKKTARAATPPKRRPQPAAKKVEQPVET.

The protein belongs to the ProQ family.

The protein localises to the cytoplasm. RNA chaperone with significant RNA binding, RNA strand exchange and RNA duplexing activities. In Aliivibrio fischeri (strain ATCC 700601 / ES114) (Vibrio fischeri), this protein is RNA chaperone ProQ.